We begin with the raw amino-acid sequence, 155 residues long: S-ribosylhomocysteine lyase (155 aa).

3 residues coordinate Fe cation: histidine 57, histidine 61, and cysteine 124.

The protein belongs to the LuxS family. As to quaternary structure, homodimer. It depends on Fe cation as a cofactor.

It carries out the reaction S-(5-deoxy-D-ribos-5-yl)-L-homocysteine = (S)-4,5-dihydroxypentane-2,3-dione + L-homocysteine. Functionally, involved in the synthesis of autoinducer 2 (AI-2) which is secreted by bacteria and is used to communicate both the cell density and the metabolic potential of the environment. The regulation of gene expression in response to changes in cell density is called quorum sensing. Catalyzes the transformation of S-ribosylhomocysteine (RHC) to homocysteine (HC) and 4,5-dihydroxy-2,3-pentadione (DPD). The protein is S-ribosylhomocysteine lyase of Listeria monocytogenes serovar 1/2a (strain ATCC BAA-679 / EGD-e).